The following is a 396-amino-acid chain: Elongation factor Tu (396 aa).

Residues 10–205 (KPHVNVGTIG…AVDEYIPTPE (196 aa)) enclose the tr-type G domain. The interval 19–26 (GHVDHGKT) is G1. 19–26 (GHVDHGKT) contacts GTP. Thr-26 is a Mg(2+) binding site. A G2 region spans residues 61 to 65 (GITIA). Residues 82 to 85 (DCPG) are G3. Residues 82 to 86 (DCPGH) and 137 to 140 (NKTD) contribute to the GTP site. A G4 region spans residues 137–140 (NKTD). Residues 175-177 (SAL) are G5.

The protein belongs to the TRAFAC class translation factor GTPase superfamily. Classic translation factor GTPase family. EF-Tu/EF-1A subfamily. In terms of assembly, monomer.

It is found in the cytoplasm. The catalysed reaction is GTP + H2O = GDP + phosphate + H(+). Its function is as follows. GTP hydrolase that promotes the GTP-dependent binding of aminoacyl-tRNA to the A-site of ribosomes during protein biosynthesis. This Salinibacter ruber (strain DSM 13855 / M31) protein is Elongation factor Tu.